A 286-amino-acid polypeptide reads, in one-letter code: Protein HEXIM2 (286 aa).

The segment covering 1–11 (MMATPNQTACN) has biased composition (polar residues). The segment at 1–195 (MMATPNQTAC…GEFQRKDFSE (195 aa)) is disordered. S29 bears the Phosphoserine mark. T32 bears the Phosphothreonine mark. Position 39 is a phosphoserine (S39). The residue at position 46 (T46) is a Phosphothreonine. A phosphoserine mark is found at S51, S53, S71, S76, and S81. Residues 68-78 (NSRSPRTQSPG) are compositionally biased toward polar residues. Positions 87–103 (ARKKHRRRPSKRKRHWR) are enriched in basic residues. Over residues 113–132 (KQQRDERQSQRASRVREEMF) the composition is skewed to basic and acidic residues. Residues 140 to 143 (PYNT) form an interaction with P-TEFb region. Over residues 178-195 (SDGRGRAHGEFQRKDFSE) the composition is skewed to basic and acidic residues. Positions 207–277 (GRSKQELVRD…QENQMWNREG (71 aa)) form a coiled coil. An interaction with CCNT1, HEXIM1 and HEXIM2 region spans residues 226-286 (QAEEETRRLQ…GCRCDEEPGT (61 aa)).

This sequence belongs to the HEXIM family. Homooligomer and heterooligomer with HEXIM1; probably dimeric. Core component of the 7SK RNP complex, at least composed of 7SK RNA, LARP7, MEPCE, HEXIM1 (or HEXIM2) and P-TEFb (composed of CDK9 and CCNT1/cyclin-T1). Interacts with CCNT2. As to expression, ubiquitously expressed with higher expression in testis. HEXIM1 and HEXIM2 are differentially expressed.

The protein resides in the nucleus. Transcriptional regulator which functions as a general RNA polymerase II transcription inhibitor. Core component of the 7SK RNP complex: in cooperation with 7SK snRNA sequesters P-TEFb in a large inactive 7SK snRNP complex preventing RNA polymerase II phosphorylation and subsequent transcriptional elongation. This Homo sapiens (Human) protein is Protein HEXIM2 (HEXIM2).